The sequence spans 706 residues: Termination factor NPH-I homolog (706 aa).

The 166-residue stretch at 62–227 (IGQGENTRGL…VPCFNMLSGR (166 aa)) folds into the Helicase ATP-binding domain. 75–82 (HQMGMGKT) is a binding site for ATP. The DEAH box motif lies at 168–171 (DEAH). The Helicase C-terminal domain maps to 417–599 (QCLQPLKVLE…HLNSAFRDLL (183 aa)).

The protein belongs to the DEAD box helicase family. DEAH subfamily. In terms of assembly, part of the viral DNA-directed RNA polymerase that consists of 8 polII-like subunits (RPB1, RPB2, RPB3, RPB5, RPB6, RPB7, RPB9, RPB10), a capping enzyme and a termination factor.

It localises to the virion. Functionally, putative DNA-dependent ATPase required for providing the needed energy to achieve the termination of early transcripts. The protein is Termination factor NPH-I homolog of Ornithodoros (relapsing fever ticks).